The sequence spans 296 residues: D-alanine--D-alanine ligase (296 aa).

The ATP-grasp domain occupies 103–293 (KEILMHHRMP…FDSFVKRIIE (191 aa)). Residue 129–180 (ISFPAAVKPSSGGSSIATFKVKSIQELKHAYEEASKYGEVMIEQWVTGKEIT) coordinates ATP. Residues Asp247, Glu260, and Asn262 each contribute to the Mg(2+) site.

The protein belongs to the D-alanine--D-alanine ligase family. Requires Mg(2+) as cofactor. Mn(2+) is required as a cofactor.

The protein resides in the cytoplasm. The catalysed reaction is 2 D-alanine + ATP = D-alanyl-D-alanine + ADP + phosphate + H(+). It participates in cell wall biogenesis; peptidoglycan biosynthesis. Its function is as follows. Cell wall formation. This chain is D-alanine--D-alanine ligase, found in Francisella tularensis subsp. holarctica (strain LVS).